Reading from the N-terminus, the 465-residue chain is Cyclin-A1 (465 aa).

It belongs to the cyclin family. Cyclin AB subfamily. Interacts with the CDK2 and the CDC2 protein kinases to form a serine/threonine kinase holoenzyme complex. The cyclin subunit imparts substrate specificity to the complex. Does not bind CDK4 and CDK5 (in vitro). The cyclin A1-CDK2 complex interacts with transcription factor E2F-1 and RB proteins. Found in a complex with CDK2, CABLES1 and CCNE1. Interacts with INCA1. Interacts with KLHDC9. Polyubiquitinated via 'Lys-11'-linked ubiquitin by the anaphase-promoting complex (APC/C), leading to its degradation by the proteasome. Deubiquitinated and stabilized by USP37 enables entry into S phase. Ubiquitinated during the G1 phase by the SCF(FBXO31) complex, leading to its proteasomal degradation. Very high levels in testis and very low levels in brain. Also found in myeloid leukemia cell lines.

It is found in the nucleus. May be involved in the control of the cell cycle at the G1/S (start) and G2/M (mitosis) transitions. May primarily function in the control of the germline meiotic cell cycle and additionally in the control of mitotic cell cycle in some somatic cells. In Homo sapiens (Human), this protein is Cyclin-A1 (CCNA1).